Here is a 135-residue protein sequence, read N- to C-terminus: Ribosomal RNA large subunit methyltransferase H (135 aa).

S-adenosyl-L-methionine is bound by residues Leu52, Gly83, and 102-107; that span reads LSSLTL.

The protein belongs to the RNA methyltransferase RlmH family. As to quaternary structure, homodimer.

The protein resides in the cytoplasm. The catalysed reaction is pseudouridine(1915) in 23S rRNA + S-adenosyl-L-methionine = N(3)-methylpseudouridine(1915) in 23S rRNA + S-adenosyl-L-homocysteine + H(+). In terms of biological role, specifically methylates the pseudouridine at position 1915 (m3Psi1915) in 23S rRNA. This chain is Ribosomal RNA large subunit methyltransferase H, found in Polynucleobacter necessarius subsp. necessarius (strain STIR1).